Here is an 838-residue protein sequence, read N- to C-terminus: Probable beta-glucosidase I (838 aa).

Asn57 and Asn197 each carry an N-linked (GlcNAc...) asparagine glycan. Residue Asp225 is part of the active site. A PA14 domain is found at Glu395 to Ala555. An N-linked (GlcNAc...) asparagine glycan is attached at Asn493.

The protein belongs to the glycosyl hydrolase 3 family.

Its subcellular location is the secreted. The enzyme catalyses Hydrolysis of terminal, non-reducing beta-D-glucosyl residues with release of beta-D-glucose.. It participates in glycan metabolism; cellulose degradation. Its function is as follows. Beta-glucosidases are one of a number of cellulolytic enzymes involved in the degradation of cellulosic biomass. Catalyzes the last step releasing glucose from the inhibitory cellobiose. This is Probable beta-glucosidase I (bglI) from Aspergillus clavatus (strain ATCC 1007 / CBS 513.65 / DSM 816 / NCTC 3887 / NRRL 1 / QM 1276 / 107).